The chain runs to 483 residues: Protein hedgehog (483 aa).

Residues 1–19 (MDNQTVAAIWSCASATCLS) form the signal peptide. Positions 20–92 (LDAKRHSVET…LALNFRHAHS (73 aa)) are excised as a propeptide. Residues 28-57 (ETNTNDRQAPPGLSNSNNNNNNNKSTAVDA) form a disordered region. A compositionally biased stretch (low complexity) spans 41–50 (SNSNNNNNNN). Residue Cys93 is the site of N-palmitoyl cysteine attachment. The Ca(2+) site is built by Glu157, Glu158, Asp163, Thr193, Glu194, Asp197, and Asp199. Gly266 carries the Cholesterol glycine ester lipid modification.

Belongs to the hedgehog family. In terms of assembly, interacts with shf. Post-translationally, the C-terminal part of the hedgehog protein precursor displays an autoproteolysis activity that results in the cleavage of the full-length protein into two parts (N-product and C-product). In addition, the C-terminal part displays a cholesterol transferase activity that results by the covalent attachment of a cholesterol moiety to the C-terminal of the newly generated N-product. The N-product is the active species in both local and long-range signaling, whereas the C-product has no signaling activity. In terms of processing, cholesterylation is required for N-product targeting to lipid rafts and multimerization. N-palmitoylation by Rasp of the hedgehog N-product, within the secretory pathway, is required for the embryonic and larval patterning activities of the hedgehog signal.

The protein resides in the nucleus. It localises to the cytoplasm. Its subcellular location is the cell membrane. It carries out the reaction glycyl-L-cysteinyl-[protein] + cholesterol + H(+) = [protein]-C-terminal glycyl cholesterol ester + N-terminal L-cysteinyl-[protein]. In terms of biological role, the C-terminal part of the hedgehog protein precursor displays an autoproteolysis activity that results in the cleavage of the full-length protein into two parts (N-product and C-product). In addition, the C-terminal part displays a cholesterol transferase activity that results by the covalent attachment of a cholesterol moiety to the C-terminal of the newly generated N-product. Once cleaved, the C-product has no signaling activity and diffuses from the cell. Functionally, the dually lipidated hedgehog protein N-product is a morphogen which is essential for a variety of patterning events during development. Establishes the anterior-posterior axis of the embryonic segments and patterns the larval imaginal disks. Binds to the patched (ptc) receptor, which functions in association with smoothened (smo), to activate the transcription of target genes wingless (wg), decapentaplegic (dpp) and ptc. In the absence of hh, ptc represses the constitutive signaling activity of smo through fused (fu). Essential component of a signaling pathway which regulates the Duox-dependent gut immune response to bacterial uracil; required to activate Cad99C-dependent endosome formation, norpA-dependent Ca2+ mobilization and p38 MAPK, which are essential steps in the Duox-dependent production of reactive oxygen species (ROS) in response to intestinal bacterial infection. During photoreceptor differentiation, it up-regulates transcription of Ubr3, which in turn promotes the hh-signaling pathway by mediating the ubiquitination and degradation of cos. In Drosophila virilis (Fruit fly), this protein is Protein hedgehog.